A 119-amino-acid polypeptide reads, in one-letter code: UPF0212 protein Mlab_0931 (119 aa).

It belongs to the UPF0212 family.

This Methanocorpusculum labreanum (strain ATCC 43576 / DSM 4855 / Z) protein is UPF0212 protein Mlab_0931.